Reading from the N-terminus, the 77-residue chain is Liver-expressed antimicrobial peptide 2 (77 aa).

Residues 1–22 (MWHLKLCAVLMIFLLLLGQTDG) form the signal peptide. Residues 23–37 (SPIPEVSSAKRRPRR) constitute a propeptide that is removed on maturation. Disulfide bonds link Cys-54–Cys-65 and Cys-60–Cys-70.

Belongs to the LEAP2 family.

The protein resides in the secreted. Its function is as follows. Has an antimicrobial activity. This Macaca mulatta (Rhesus macaque) protein is Liver-expressed antimicrobial peptide 2 (LEAP2).